A 231-amino-acid polypeptide reads, in one-letter code: Large ribosomal subunit protein uL1 (231 aa).

Belongs to the universal ribosomal protein uL1 family. As to quaternary structure, part of the 50S ribosomal subunit.

In terms of biological role, binds directly to 23S rRNA. The L1 stalk is quite mobile in the ribosome, and is involved in E site tRNA release. Its function is as follows. Protein L1 is also a translational repressor protein, it controls the translation of the L11 operon by binding to its mRNA. The polypeptide is Large ribosomal subunit protein uL1 (Halalkalibacterium halodurans (strain ATCC BAA-125 / DSM 18197 / FERM 7344 / JCM 9153 / C-125) (Bacillus halodurans)).